A 231-amino-acid chain; its full sequence is MRAACVIILASLTVFMSPGLQCQPLAGEGDPSLDELFQRAESLLIRSILTQTEDENHGDGEQTEWLEKRQHPGKRQHPGKREDTDYEDEAAALQKRQHPGKREEEEDSARLRRQHPGKRLSLEHMMLEEPTAQSELAKRQHPGRRYLMLLHKRQHPGRRELHEAAGDFSDLAKRQHPGKRLCEDWDVTGCDQASILLELLDNVNKSRAEEKRQHPGKRFALEDELTEQESL.

Positions 1-22 are cleaved as a signal peptide; the sequence is MRAACVIILASLTVFMSPGLQC. The disordered stretch occupies residues 50–139; the sequence is TQTEDENHGD…PTAQSELAKR (90 aa). Over residues 54–70 the composition is skewed to basic and acidic residues; that stretch reads DENHGDGEQTEWLEKRQ. The residue at position 70 (Gln70) is a Pyrrolidone carboxylic acid. Pro72 is modified (proline amide). Gln76 is modified (pyrrolidone carboxylic acid). Pro78 bears the Proline amide mark. A Pyrrolidone carboxylic acid modification is found at Gln97. Pro99 is modified (proline amide). Residue Gln114 is modified to Pyrrolidone carboxylic acid. Pro116 bears the Proline amide mark. A Pyrrolidone carboxylic acid modification is found at Gln140. Pro142 carries the post-translational modification Proline amide. Gln154 carries the post-translational modification Pyrrolidone carboxylic acid. Position 156 is a proline amide (Pro156). Gln175 is modified (pyrrolidone carboxylic acid). Pro177 is subject to Proline amide. Residues 206-231 are disordered; sequence SRAEEKRQHPGKRFALEDELTEQESL. Position 213 is a pyrrolidone carboxylic acid (Gln213). Pro215 is modified (proline amide). Residues 222–231 show a composition bias toward acidic residues; it reads EDELTEQESL.

The protein belongs to the TRH family.

Its subcellular location is the secreted. Its function is as follows. Functions as a regulator of the biosynthesis of TSH in the anterior pituitary gland and as a neurotransmitter/ neuromodulator in the central and peripheral nervous systems. This chain is Pro-thyrotropin-releasing hormone (trh), found in Carassius auratus (Goldfish).